The chain runs to 306 residues: Mitochondrial substrate carrier family protein M (306 aa).

At 1 to 10 the chain is on the mitochondrial intermembrane side; it reads MRYILNNNVE. 3 Solcar repeats span residues 5 to 98, 108 to 195, and 207 to 299; these read LNNN…YKNI, LNTF…IKFY, and LNAS…IKKS. Residues 11 to 31 form a helical membrane-spanning segment; the sequence is GTSALLGSTVATAFLQPFDFL. Over 32–72 the chain is Mitochondrial matrix; the sequence is KIRLQGSGFASGGDLNKFKRVGVIDTCKNVLKNEGIKQFWR. The chain crosses the membrane as a helical span at residues 73 to 89; that stretch reads GSSPTIVASGIAWGTYM. Residues 90–113 lie on the Mitochondrial intermembrane side of the membrane; sequence HFYEAYKNILKSKYNVTQLNTFDH. A helical membrane pass occupies residues 114 to 134; sequence FICAVGASATQVFITNPIFLI. The Mitochondrial matrix portion of the chain corresponds to 135–163; it reads KTRMQLQTPGSANYYTGIFDGIKKTVKVE. The chain crosses the membrane as a helical span at residues 164–184; the sequence is GFKGLYKGVIPSLWLTFHGGI. The Mitochondrial intermembrane segment spans residues 185-211; it reads QMSSYEHIKFYFSSNSGKSLDSLNASE. Residues 212–232 traverse the membrane as a helical segment; it reads IFIASSISKFLASTILYPFQV. Residues 233 to 278 are Mitochondrial matrix-facing; sequence VKTRLQDERNIPNQNNVRVYNGTKDVIFKILKNEGIIGFYRGLVPN. Residues 279–296 traverse the membrane as a helical segment; it reads TLKVIPNTSITLLLYEEI. Topologically, residues 297–306 are mitochondrial intermembrane; it reads KKSFNYIINE.

It belongs to the mitochondrial carrier (TC 2.A.29) family.

It is found in the mitochondrion inner membrane. Functionally, mitochondrial solute carriers shuttle metabolites, nucleotides, and cofactors through the mitochondrial inner membrane. Transports folate across the inner membranes of mitochondria. The sequence is that of Mitochondrial substrate carrier family protein M (mcfM) from Dictyostelium discoideum (Social amoeba).